Consider the following 383-residue polypeptide: MSPGSRGRPRQRLEDRGLMKPPSLSKRRLLPRVQFLPLLLLALAMGLAFYIVWNSWHPGVEEMSRSRDLRVPLIGSLSEAKLRLVVGQLDPQRLWGTFLRPLLIVRPPGSSGNLQVRKFLEATLQSLSAGWHVELDPFTASTPLGPLDFGNVVATLDPGAARHLTLACHYDSKFFPPGLPPFVGATDSAVPCALLLELVQALDAMLSRIKQQAAPVTLQLLFLDGEEALKEWGPKDSLYGSRHLAQIMESIPHSPGPTRIQAIELFVLLDLLGASSPIFFSHFPRTARWFQRLRSIEKRLHRLNLLQSHPQEVMYFQPGEPPGPVEDDHIPFLRRGVPVLHLIATPFPAVWHTPADTEANLHPPTVHNLSRILAVFLAEYLGL.

A helical transmembrane segment spans residues 33–53; sequence VQFLPLLLLALAMGLAFYIVW. Cysteine 168 and cysteine 192 are joined by a disulfide. Aspartate 187 serves as a coordination point for Zn(2+). The active-site Proton acceptor is glutamate 226. Glutamate 227 provides a ligand contact to Zn(2+). Aspartate 270 acts as the Proton acceptor in catalysis. Residue histidine 352 coordinates Zn(2+).

Belongs to the glutaminyl-peptide cyclotransferase family. As to expression, detected in thalamus, hippocampus, brain cortex, cerebellum, kidney, lung and liver, and at low levels in heart and spleen.

The protein resides in the golgi apparatus membrane. The enzyme catalyses N-terminal L-glutaminyl-[peptide] = N-terminal 5-oxo-L-prolyl-[peptide] + NH4(+). Responsible for the biosynthesis of pyroglutamyl peptides. The protein is Glutaminyl-peptide cyclotransferase-like protein (Qpctl) of Mus musculus (Mouse).